The primary structure comprises 613 residues: Ribosome-associated molecular chaperone SSB1 (613 aa).

Residues 1–391 form a nucleotide binding domain (NBD) region; that stretch reads MADGVFQGAI…ILTGQSTSDE (391 aa). ATP contacts are provided by residues 16–18, lysine 73, 205–207, 271–278, and glycine 342; these read TTY, GGT, and ERAKRTLS. The inter-domain linker stretch occupies residues 392–402; the sequence is TKDLLLLDVAP. The interval 403-613 is substrate binding domain (SBD); the sequence is LSLGVGMQGD…RVVTKAMSSR (211 aa). A lid domain (SBDalpha) region spans residues 516 to 612; the sequence is SEDIEKMVNQ…KRVVTKAMSS (97 aa). The Nuclear export signal signature appears at 574–582; that stretch reads IEAALADAL.

This sequence belongs to the heat shock protein 70 family. Ssb-type Hsp70 subfamily. As to quaternary structure, binds to ribosomes. Binds close to the ribosomal tunnel exit via contacts with both ribosomal proteins and rRNA. Directly interacts with nascent polypeptides. This interaction is dependent on the ribosome-associated complex (RAC). Interacts with SSE1. Interacts with FES1.

Its subcellular location is the cytoplasm. The enzyme catalyses ATP + H2O = ADP + phosphate + H(+). Functionally, ribosome-bound, Hsp70-type chaperone that assists in the cotranslational folding of newly synthesized proteins in the cytosol. Stimulates folding by interacting with nascent chains, binding to short, largely hydrophobic sequences exposed by unfolded proteins, thereby stabilizing longer, more slowly translated, and aggregation-prone nascent polypeptides and domains that cannot fold stably until fully synthesized. The Hsp70-protein substrate interaction depends on ATP-binding and on allosteric regulation between the NBD and the SBD. The ATP-bound state is characterized by a fast exchange rate of substrate (low affinity state), while in the ADP-bound state exchange is much slower (high affinity state). During the Hsp70 cycle, the chaperone switches between the ATP-bound state (open conformation) and the ADP-bound state (closed conformation) by major conformational rearrangements involving mainly the lid domain. Ssb cooperates with a specific Hsp40/Hsp70 co-chaperone termed the ribosome-associated complex (RAC), which stimulates the ATPase activity of the ribosome-associated pool of Ssbs and switches it to the high affinity substrate binding state. Hsp110 chaperone SSE1 and FES1 act as nucleotide exchange factors that cause substrate release. The sequence is that of Ribosome-associated molecular chaperone SSB1 (SSB1) from Nakaseomyces delphensis (Yeast).